The sequence spans 708 residues: Vertnin (708 aa).

2 disordered regions span residues 473–499 (PWKGEGGEGAGKATAGGPPAPHEFLPP) and 561–636 (APAL…PVAE). Basic and acidic residues predominate over residues 568–582 (GLREAKEKQEKEAGR).

Belongs to the vertnin family.

This is Vertnin (VRTN) from Ailuropoda melanoleuca (Giant panda).